The following is a 629-amino-acid chain: tRNA uridine 5-carboxymethylaminomethyl modification enzyme MnmG (629 aa).

An FAD-binding site is contributed by 13–18; that stretch reads GGGHAG. An NAD(+)-binding site is contributed by 273–287; it reads GPRYCPSIEDKVNRF.

This sequence belongs to the MnmG family. Homodimer. Heterotetramer of two MnmE and two MnmG subunits. It depends on FAD as a cofactor.

It is found in the cytoplasm. Functionally, NAD-binding protein involved in the addition of a carboxymethylaminomethyl (cmnm) group at the wobble position (U34) of certain tRNAs, forming tRNA-cmnm(5)s(2)U34. The sequence is that of tRNA uridine 5-carboxymethylaminomethyl modification enzyme MnmG from Hahella chejuensis (strain KCTC 2396).